The chain runs to 287 residues: Bifunctional protein FolD (287 aa).

NADP(+) contacts are provided by residues G160–S162, S189, and T230.

It belongs to the tetrahydrofolate dehydrogenase/cyclohydrolase family. As to quaternary structure, homodimer.

The catalysed reaction is (6R)-5,10-methylene-5,6,7,8-tetrahydrofolate + NADP(+) = (6R)-5,10-methenyltetrahydrofolate + NADPH. The enzyme catalyses (6R)-5,10-methenyltetrahydrofolate + H2O = (6R)-10-formyltetrahydrofolate + H(+). It participates in one-carbon metabolism; tetrahydrofolate interconversion. Its function is as follows. Catalyzes the oxidation of 5,10-methylenetetrahydrofolate to 5,10-methenyltetrahydrofolate and then the hydrolysis of 5,10-methenyltetrahydrofolate to 10-formyltetrahydrofolate. In Chlamydia abortus (strain DSM 27085 / S26/3) (Chlamydophila abortus), this protein is Bifunctional protein FolD.